The following is a 294-amino-acid chain: S-adenosylmethionine uptake transporter (294 aa).

10 helical membrane passes run 4–24 (ALKT…TSSI), 41–61 (VAFF…VYYG), 74–91 (VLRG…TYGL), 98–118 (TATV…VFIL), 121–141 (NIIW…VVML), 148–168 (FNPE…LDII), 178–198 (MLSM…PVAM), 207–227 (FELA…FFLL), 237–257 (ATAP…YFIF), and 260–280 (FPDK…LFII). EamA domains are found at residues 22–141 (SSIN…VVML) and 160–280 (ISFA…LFII).

This sequence belongs to the drug/metabolite transporter (DMT) superfamily. 10 TMS drug/metabolite exporter (DME) (TC 2.A.7.3) family.

Its subcellular location is the cell inner membrane. Its activity is regulated as follows. Transport is inhibited by S-adenosylethionine and to a lesser extent by S-adenosylhomocysteine. Unlike eukaryotic transporters is not inhibited by sinfungin. Also inhibited by 2.4-dinitrophenol, suggesting transport is an energy-dependent process. Its function is as follows. Transports S-adenosylmethionine. The sequence is that of S-adenosylmethionine uptake transporter (sam) from Rickettsia prowazekii (strain Madrid E).